Reading from the N-terminus, the 1592-residue chain is MAFWLPQNIQKRLLLYVLQQISLFSNIDLSNLDVSIGSKSHFSFHDVNLSLDDLNIPNVQINEGIVDELVLKLTVSGGVEIDGSGLRFIMTPLYSSGSQELHSDFLVKSIQDLTNSMLQFSDPLTTYNRYKEDDISSSDSSSDLNSNIEASKPAANGSYTLQNMRNKALNVALAKLKIALKDVTIRFIVNDRDPSDNIVEVHLESIQLITTDANLRHINIENITISSIQKQAVPDSPVHPFNNDDLSQSVYLSKMEATSLYMSAMEEQSNEDPSEPQVTQEEQENDKCKESLMEINNLNIAFKGLSSVNDLRMSNIVIDIQDVHLAIHKIVEIKNSTLKNIIDIIVTHLDANESFSCQDSQSPSPDKQEPSALSSVDIKCIYLNLGQDITVILKSFKLEQKENNSLAFSLGSFYSNSSPLTISHKTKPLLTGEQTPQSIALNMGDELDIIISHDGIAHFFKIFQFVSKCMSFYQNKSKGMMPQIASDTKRTVQLTSKAVKLSLKFPYFLLCFQVSPFIYDSNRELYIELVDVFKKLPSRCTKILTMSSITISNLQSPLQLGSYDDTLKEALIYSSVHAIIKEVIFNEEYSGIVQLVEDISAFGKLFTDSKNSECTGKSKSKRGSFLQRSVRVLNSSRFVYKQSLSANFSLKIDSMKLKVSEIIGPQFGSVEALLSNNFFAITDDSQIVYFTKNLKVERKTPSLLEPQEIMSVVLNKAVNEPVLYVHRRANGKLKVIFNNIRIHYYARWLEILKKNIGPDNASSKDEPVSQKLSKKQPTSGFPWELKCLDCSLILHPFRLKSVMVIVLDNLTTGGSSFIPQAKLLSKANTLFLIDDYQNFKIQKDKNWPSLINFYAGQGFSAIGKIDTLNFLINKSDGALLLDCKIEQVGLSLCADSFQTFCQLCIDLKYPQTFPDEEKFRTQLKNPIDVFKDIDCDLFNSAFIRENNHQNDYDSVHLVDSFLDKTHEFNNGARSKLSSQGSYEMDSSSGTATGGILLPHESYLDSAQPKEEDTPPIASKEQERDVDIRGSIDVEKVVIKLFDGYDWKYTRKFIANTVEKLDKELSKAEASSSKSNVPQSEANIFDSIYISANKNNVTDLRRNLDGEIQGVQNSFSDVSKVNLRPSKHYKALIQLNKVHVNLKNYRVDEPDESNSDNSTDVLNRCVVSIYEFEIIDNVPTSTWNKFVTLLKHEPWPHSSPMFLLDLEFIRPIDFLQAVELVMQLNVAPLRLHVDQDTLEFLIRFLGFKDKRFELIDEYPDIVFIQKFSTNSIKLRLDYKPKKVDYAGLRSGQTSELMNFFTLDGSKIILKSVVLYGLNGFDELNNKLKAIWTPDITKKQLPGVLEGLAPVRSFMAIGSGVKTLVTVLMSEYRQEGHLGRSLKKGGNVFLKTTTGDFVKLGVKLTSGTQAILENTEELFGGVGSNGRVYDASKFGSADGADSDTAAVLDLDTLFEEDQLVGSKYSRIRDHEPTAVVIDMSSPGDHNEPTIVSLYADQPLDLPTGLKEAYSSLEKHMHIAYDAVWRAKGQMKDDKRGGPSAAAVYVARAAPVAIIRPLIGATEAVSKTLQGIANQVDKTHNEQINDKYKSNRTDS.

Residues 2 to 21 are ER-targeting domain; that stretch reads AFWLPQNIQKRLLLYVLQQI. A Phosphoserine modification is found at S236. Position 249 is a phosphoserine; by ATG1 (S249). The tract at residues 264 to 286 is disordered; sequence AMEEQSNEDPSEPQVTQEEQEND. A coiled-coil region spans residues 1049–1075; the sequence is TRKFIANTVEKLDKELSKAEASSSKSN. Phosphoserine; by ATG1 is present on S1086. Residues 1347–1373 are PAS-targeting domain; that stretch reads APVRSFMAIGSGVKTLVTVLMSEYRQE.

It belongs to the ATG2 family. As to quaternary structure, interacts with ATG18. Interacts with ATG9.

It is found in the preautophagosomal structure membrane. Its subcellular location is the endoplasmic reticulum membrane. It catalyses the reaction a 1,2-diacyl-sn-glycero-3-phosphocholine(in) = a 1,2-diacyl-sn-glycero-3-phosphocholine(out). It carries out the reaction a 1,2-diacyl-sn-glycero-3-phospho-L-serine(in) = a 1,2-diacyl-sn-glycero-3-phospho-L-serine(out). The enzyme catalyses a 1,2-diacyl-sn-glycero-3-phosphoethanolamine(in) = a 1,2-diacyl-sn-glycero-3-phosphoethanolamine(out). Lipid transfer protein required for autophagosome completion and peroxisome degradation. Tethers the edge of the isolation membrane (IM) to the endoplasmic reticulum (ER) and mediates direct lipid transfer from ER to IM for IM expansion. ATG2 binds to the ER exit site (ERES), which is the membrane source for autophagosome formation, using basic residues in its N-terminal region (NR) and to the expanding edge of the IM through its C-terminal region. The latter binding is assisted by an ATG18-PtdIns3P interaction. ATG2 then extracts phospholipids from the membrane source using its NR and transfers them to ATG9 to the IM through its predicted beta-sheet-rich structure for membrane expansion. ATG2 is also involved in the recruitment of lipids to a restricted region close to the vacuole, termed the vacuole-isolation membrane contact site (VICS), which is also essential for autophagosome formation. Necessary for the localization of ATG18 to the preautophagosomal structure (PAS) and the binding of ATG18 to ATG9. ATG2 is the most downstream ATG protein in the preautophagosomal structure organization process. Involved in correct ATG9 trafficking through the preautophagosomal structure and in peroxisome degradation. Plays a significant role in life span extension. In Saccharomyces cerevisiae (strain ATCC 204508 / S288c) (Baker's yeast), this protein is Autophagy-related protein 2 (ATG2).